Consider the following 290-residue polypeptide: 33 kDa chaperonin (290 aa).

Cystine bridges form between cysteine 235–cysteine 237 and cysteine 268–cysteine 271.

The protein belongs to the HSP33 family. Post-translationally, under oxidizing conditions two disulfide bonds are formed involving the reactive cysteines. Under reducing conditions zinc is bound to the reactive cysteines and the protein is inactive.

It localises to the cytoplasm. Redox regulated molecular chaperone. Protects both thermally unfolding and oxidatively damaged proteins from irreversible aggregation. Plays an important role in the bacterial defense system toward oxidative stress. The sequence is that of 33 kDa chaperonin from Streptococcus pneumoniae serotype 19F (strain G54).